Consider the following 174-residue polypeptide: B3 domain-containing protein At3g06220 (174 aa).

Residues 8-101 constitute a DNA-binding region (TF-B3); sequence PRFYTVFLSC…SYEVSIYGRG (94 aa). A disordered region spans residues 114 to 174; sequence EISDESESDN…ISDASDSDYY (61 aa). Composition is skewed to acidic residues over residues 139-150 and 164-174; these read ENSDDTEGDNDS and EISDASDSDYY.

It is found in the nucleus. This Arabidopsis thaliana (Mouse-ear cress) protein is B3 domain-containing protein At3g06220.